The following is a 99-amino-acid chain: Leydig cell tumor 10 kDa protein homolog (99 aa).

The interval 1 to 36 is disordered; the sequence is MAQGQRKFQAHKPAKSKTAAAASEKNRGPRKGGRVI.

The protein belongs to the UPF0390 family.

In terms of biological role, may have a potential role in hypercalcemia of malignancy. This is Leydig cell tumor 10 kDa protein homolog (C19orf53) from Homo sapiens (Human).